The chain runs to 407 residues: Argininosuccinate synthase (407 aa).

Residues 11 to 19 (AYSGGLDTS) and Ala38 each bind ATP. 2 residues coordinate L-citrulline: Tyr91 and Ser96. Residue Gly121 coordinates ATP. 3 residues coordinate L-aspartate: Thr123, Asn127, and Asp128. Asn127 is a binding site for L-citrulline. 5 residues coordinate L-citrulline: Arg131, Ser181, Ser190, Glu266, and Tyr278.

Belongs to the argininosuccinate synthase family. Type 1 subfamily. In terms of assembly, homotetramer.

It localises to the cytoplasm. It catalyses the reaction L-citrulline + L-aspartate + ATP = 2-(N(omega)-L-arginino)succinate + AMP + diphosphate + H(+). It participates in amino-acid biosynthesis; L-arginine biosynthesis; L-arginine from L-ornithine and carbamoyl phosphate: step 2/3. The polypeptide is Argininosuccinate synthase (Campylobacter concisus (strain 13826)).